The primary structure comprises 331 residues: High-affinity nickel-transport protein NixA (331 aa).

Over 1-5 the chain is Cytoplasmic; sequence MKLWF. A helical transmembrane segment spans residues 6 to 26; sequence PYFLAIVFLHALGLALLFMAN. Over 27 to 33 the chain is Periplasmic; it reads NASFYAA. The helical transmembrane segment at 34–54 threads the bilayer; it reads ASMAYMLGAKHAFDADHIACI. At 55–66 the chain is on the cytoplasmic side; it reads DNTIRKLTQQGK. The helical transmembrane segment at 67 to 87 threads the bilayer; the sequence is NAYGVGFYFSMGHSSVVILMT. At 88-113 the chain is on the periplasmic side; it reads IISAFAIAWAKEHTPMLEEIGGVVGT. The helical transmembrane segment at 114–135 threads the bilayer; sequence LVSGLFLLIIGLLNAIILLDLL. Residues 136–178 are Cytoplasmic-facing; that stretch reads KIFKKSHSNESLSQQQNEEIERLLTSRGLLNRFFKPLFNFVSK. A helical transmembrane segment spans residues 179-199; the sequence is SWHIYPIGFLFGLGFDTASEI. Topologically, residues 200-225 are periplasmic; it reads ALLALSSSAIKVSMVGMLSLPILFAA. Residues 226–246 form a helical membrane-spanning segment; sequence GMSLFDTLDGAFMLKAYDWAF. The Cytoplasmic portion of the chain corresponds to 247–252; that stretch reads KTPLRK. Residues 253–273 form a helical membrane-spanning segment; that stretch reads IYYNISITALSVFIALFIGLI. Over 274-302 the chain is Periplasmic; it reads ELFQVVSEKLHLKFENRLLRALQSLEFTD. Residues 303 to 322 traverse the membrane as a helical segment; the sequence is LGYYLVGLFVIAFLGSFFLW. Topologically, residues 323 to 331 are cytoplasmic; it reads KIKFSKLES.

It belongs to the NiCoT transporter (TC 2.A.52) family.

The protein localises to the cell inner membrane. Its function is as follows. High-affinity nickel intake protein. Imports nickel ions in an energy-dependent fashion. Necessary for the expression of catalytically active urease. In Helicobacter pylori (strain ATCC 700392 / 26695) (Campylobacter pylori), this protein is High-affinity nickel-transport protein NixA (nixA).